Consider the following 222-residue polypeptide: Cytidylate kinase (222 aa).

Residue 7–15 (GPAGAGKST) participates in ATP binding.

It belongs to the cytidylate kinase family. Type 1 subfamily.

It is found in the cytoplasm. It carries out the reaction CMP + ATP = CDP + ADP. The catalysed reaction is dCMP + ATP = dCDP + ADP. This is Cytidylate kinase from Carboxydothermus hydrogenoformans (strain ATCC BAA-161 / DSM 6008 / Z-2901).